A 614-amino-acid polypeptide reads, in one-letter code: Zinc finger protein ztf-7 (614 aa).

Residues 1-10 (MSTSGSGGGN) show a composition bias toward gly residues. The interval 1–160 (MSTSGSGGGN…SRPKKPEKMS (160 aa)) is disordered. A compositionally biased stretch (polar residues) spans 18 to 41 (NVASSPNANPKKNADTESSGGSKN). The span at 54 to 69 (GSNSRNGSRTNSVSNS) shows a compositional bias: low complexity. Residues 74–83 (NRKDWTDRKS) are compositionally biased toward basic and acidic residues. Positions 132–150 (DYSDEYELDEPFSDSDDED) are enriched in acidic residues. 2 consecutive C2H2-type zinc fingers follow at residues 356-380 (NECIYCEKIFPDRNTLMDHMRKRNH) and 447-470 (VVCLLCDASEDNAQSLLEHMKTTH).

This sequence belongs to the ZNF277 family. As to quaternary structure, interacts with rps-2.

The protein resides in the cytoplasm. Its function is as follows. Probable transcription factor. Limits the ability to tolerate cold environment or cold-warm stress. In complex with rps-2, mediates the cold-warm shock response by promoting translocation of components of the RNA exosome from the nucleolus to nucleoplasm. The protein is Zinc finger protein ztf-7 of Caenorhabditis elegans.